We begin with the raw amino-acid sequence, 336 residues long: Holliday junction branch migration complex subunit RuvB (336 aa).

Positions 1–184 are large ATPase domain (RuvB-L); that stretch reads MYDEERIVSG…FGIVGHMEYY (184 aa). Residues Leu-23, Arg-24, Gly-65, Lys-68, Thr-69, Thr-70, 131 to 133, Arg-174, Tyr-184, and Arg-221 each bind ATP; that span reads EDY. Position 69 (Thr-69) interacts with Mg(2+). Residues 185–255 are small ATPAse domain (RuvB-S); sequence NEVDLSQIIK…IVQFALDLLR (71 aa). A head domain (RuvB-H) region spans residues 258–336; sequence KVGLDRTDRK…HLGIKYNKEG (79 aa). Residues Arg-313 and Arg-318 each contribute to the DNA site.

The protein belongs to the RuvB family. In terms of assembly, homohexamer. Forms an RuvA(8)-RuvB(12)-Holliday junction (HJ) complex. HJ DNA is sandwiched between 2 RuvA tetramers; dsDNA enters through RuvA and exits via RuvB. An RuvB hexamer assembles on each DNA strand where it exits the tetramer. Each RuvB hexamer is contacted by two RuvA subunits (via domain III) on 2 adjacent RuvB subunits; this complex drives branch migration. In the full resolvosome a probable DNA-RuvA(4)-RuvB(12)-RuvC(2) complex forms which resolves the HJ.

The protein resides in the cytoplasm. It carries out the reaction ATP + H2O = ADP + phosphate + H(+). Its function is as follows. The RuvA-RuvB-RuvC complex processes Holliday junction (HJ) DNA during genetic recombination and DNA repair, while the RuvA-RuvB complex plays an important role in the rescue of blocked DNA replication forks via replication fork reversal (RFR). RuvA specifically binds to HJ cruciform DNA, conferring on it an open structure. The RuvB hexamer acts as an ATP-dependent pump, pulling dsDNA into and through the RuvAB complex. RuvB forms 2 homohexamers on either side of HJ DNA bound by 1 or 2 RuvA tetramers; 4 subunits per hexamer contact DNA at a time. Coordinated motions by a converter formed by DNA-disengaged RuvB subunits stimulates ATP hydrolysis and nucleotide exchange. Immobilization of the converter enables RuvB to convert the ATP-contained energy into a lever motion, pulling 2 nucleotides of DNA out of the RuvA tetramer per ATP hydrolyzed, thus driving DNA branch migration. The RuvB motors rotate together with the DNA substrate, which together with the progressing nucleotide cycle form the mechanistic basis for DNA recombination by continuous HJ branch migration. Branch migration allows RuvC to scan DNA until it finds its consensus sequence, where it cleaves and resolves cruciform DNA. The protein is Holliday junction branch migration complex subunit RuvB of Ligilactobacillus salivarius (strain UCC118) (Lactobacillus salivarius).